A 264-amino-acid chain; its full sequence is Orotidine 5'-phosphate decarboxylase (264 aa).

Residues Asp40, 62–64, 93–102, Tyr214, and Arg233 each bind substrate; these read KTH and DRKFADIGNT. The active-site Proton donor is the Lys95.

The protein belongs to the OMP decarboxylase family.

It carries out the reaction orotidine 5'-phosphate + H(+) = UMP + CO2. It functions in the pathway pyrimidine metabolism; UMP biosynthesis via de novo pathway; UMP from orotate: step 2/2. The protein is Orotidine 5'-phosphate decarboxylase (ura4) of Schizosaccharomyces pombe (strain 972 / ATCC 24843) (Fission yeast).